A 183-amino-acid polypeptide reads, in one-letter code: Adenine phosphoribosyltransferase (183 aa).

This sequence belongs to the purine/pyrimidine phosphoribosyltransferase family. As to quaternary structure, homodimer.

It is found in the cytoplasm. It catalyses the reaction AMP + diphosphate = 5-phospho-alpha-D-ribose 1-diphosphate + adenine. The protein operates within purine metabolism; AMP biosynthesis via salvage pathway; AMP from adenine: step 1/1. Its function is as follows. Catalyzes a salvage reaction resulting in the formation of AMP, that is energically less costly than de novo synthesis. This is Adenine phosphoribosyltransferase from Klebsiella pneumoniae (strain 342).